The sequence spans 402 residues: Secondary metabolism regulator laeA (402 aa).

The tract at residues 1–70 (MSLKYYLNDL…MSPTEVCSTD (70 aa)) is disordered. Residues 11-21 (SDSDSESESEC) show a composition bias toward acidic residues.

It belongs to the methyltransferase superfamily. LaeA methyltransferase family.

Its subcellular location is the nucleus. The enzyme catalyses L-methionyl-[protein] + S-adenosyl-L-methionine = S-methyl-L-methionyl-[protein] + S-adenosyl-L-homocysteine. Functionally, methyltransferase that performs automethylation. No other methyl-accepting substrate has been identified yet. Acts as a global regulator for secondary metabolite gene expression. Negatively regulates the production of coprinoferrin, a structurally novel acylated tripeptide hydroxamate siderophore. The chain is Secondary metabolism regulator laeA from Coprinopsis cinerea (strain Okayama-7 / 130 / ATCC MYA-4618 / FGSC 9003) (Inky cap fungus).